A 146-amino-acid polypeptide reads, in one-letter code: Snaclec anticoagulant protein subunit B (146 aa).

The N-terminal stretch at 1-23 (MGRFIFVSFGLLVLFLSLSGTAA) is a signal peptide. Positions 24 to 146 (DCPSDWSSYE…IANFVCEFQA (123 aa)) constitute a C-type lectin domain. 3 disulfides stabilise this stretch: Cys-25/Cys-36, Cys-53/Cys-142, and Cys-119/Cys-134. Ser-64, Gln-66, and Glu-70 together coordinate Ca(2+). A Ca(2+)-binding site is contributed by Glu-143.

The protein belongs to the snaclec family. Heterodimer with subunit A of agkisacutacin or AaACP; disulfide-linked. In terms of tissue distribution, expressed by the venom gland.

It is found in the secreted. In terms of biological role, anticoagulant protein which binds to the gamma-carboxyglutamic acid-domain regions of factors IX and factor X in the presence of calcium with a 1 to 1 stoichiometry. Also inhibits platelet aggregation by binding to platelet glycoprotein Ibalpha (GP1BA) and functioning as a blocker of vWF. Is devoid of hemorrhagic and lethal activities. Possesses antithrombotic and thrombolytic activities. Also hydrolyzes the Aalpha-chain of fibrinogen. Does not affect the Bbeta-chain and the gamma chain. The polypeptide is Snaclec anticoagulant protein subunit B (Deinagkistrodon acutus (Hundred-pace snake)).